A 77-amino-acid chain; its full sequence is Translation initiation factor IF-1, chloroplastic (77 aa).

In terms of domain architecture, S1-like spans 1 to 71 (MKEQKWIHEG…TRGRIIYRLR (71 aa)).

It belongs to the IF-1 family. Component of the 30S ribosomal translation pre-initiation complex which assembles on the 30S ribosome in the order IF-2 and IF-3, IF-1 and N-formylmethionyl-tRNA(fMet); mRNA recruitment can occur at any time during PIC assembly.

Its subcellular location is the plastid. The protein localises to the chloroplast. Functionally, one of the essential components for the initiation of protein synthesis. Stabilizes the binding of IF-2 and IF-3 on the 30S subunit to which N-formylmethionyl-tRNA(fMet) subsequently binds. Helps modulate mRNA selection, yielding the 30S pre-initiation complex (PIC). Upon addition of the 50S ribosomal subunit IF-1, IF-2 and IF-3 are released leaving the mature 70S translation initiation complex. This is Translation initiation factor IF-1, chloroplastic from Montinia caryophyllacea (Wild clove bush).